Consider the following 452-residue polypeptide: Bifunctional protein GlmU (452 aa).

The tract at residues 1–225 is pyrophosphorylase; it reads MEVVILAAGQ…VSETLGVNSK (225 aa). UDP-N-acetyl-alpha-D-glucosamine is bound by residues 6 to 9, K20, Q71, 76 to 77, 98 to 100, G135, E150, N165, and N223; these read LAAG, GT, and YGD. Residue D100 coordinates Mg(2+). N223 lines the Mg(2+) pocket. The tract at residues 226-246 is linker; sequence PQLAELERIHQRNIAQRLMED. Residues 247–452 form an N-acetyltransferase region; sequence GVTLIDPARI…AGWKRPVKQR (206 aa). UDP-N-acetyl-alpha-D-glucosamine is bound by residues R329 and K347. H359 acts as the Proton acceptor in catalysis. Y362 and N373 together coordinate UDP-N-acetyl-alpha-D-glucosamine. Acetyl-CoA contacts are provided by residues A376, 382-383, S401, A419, and R436; that span reads NY.

In the N-terminal section; belongs to the N-acetylglucosamine-1-phosphate uridyltransferase family. This sequence in the C-terminal section; belongs to the transferase hexapeptide repeat family. Homotrimer. Mg(2+) serves as cofactor.

The protein localises to the cytoplasm. It catalyses the reaction alpha-D-glucosamine 1-phosphate + acetyl-CoA = N-acetyl-alpha-D-glucosamine 1-phosphate + CoA + H(+). It carries out the reaction N-acetyl-alpha-D-glucosamine 1-phosphate + UTP + H(+) = UDP-N-acetyl-alpha-D-glucosamine + diphosphate. Its pathway is nucleotide-sugar biosynthesis; UDP-N-acetyl-alpha-D-glucosamine biosynthesis; N-acetyl-alpha-D-glucosamine 1-phosphate from alpha-D-glucosamine 6-phosphate (route II): step 2/2. The protein operates within nucleotide-sugar biosynthesis; UDP-N-acetyl-alpha-D-glucosamine biosynthesis; UDP-N-acetyl-alpha-D-glucosamine from N-acetyl-alpha-D-glucosamine 1-phosphate: step 1/1. It functions in the pathway bacterial outer membrane biogenesis; LPS lipid A biosynthesis. In terms of biological role, catalyzes the last two sequential reactions in the de novo biosynthetic pathway for UDP-N-acetylglucosamine (UDP-GlcNAc). The C-terminal domain catalyzes the transfer of acetyl group from acetyl coenzyme A to glucosamine-1-phosphate (GlcN-1-P) to produce N-acetylglucosamine-1-phosphate (GlcNAc-1-P), which is converted into UDP-GlcNAc by the transfer of uridine 5-monophosphate (from uridine 5-triphosphate), a reaction catalyzed by the N-terminal domain. The chain is Bifunctional protein GlmU from Azoarcus sp. (strain BH72).